A 41-amino-acid chain; its full sequence is Cytochrome b559 subunit beta (41 aa).

The helical transmembrane segment at 16–32 (WLAIHALAVPTVFFLGS) threads the bilayer. Residue H20 participates in heme binding.

The protein belongs to the PsbE/PsbF family. As to quaternary structure, heterodimer of an alpha subunit and a beta subunit. PSII is composed of 1 copy each of membrane proteins PsbA, PsbB, PsbC, PsbD, PsbE, PsbF, PsbH, PsbI, PsbJ, PsbK, PsbL, PsbM, PsbT, PsbX, PsbY, PsbZ, Psb30/Ycf12, at least 3 peripheral proteins of the oxygen-evolving complex and a large number of cofactors. It forms dimeric complexes. It depends on heme b as a cofactor.

It localises to the plastid. Its subcellular location is the chloroplast thylakoid membrane. In terms of biological role, this b-type cytochrome is tightly associated with the reaction center of photosystem II (PSII). PSII is a light-driven water:plastoquinone oxidoreductase that uses light energy to abstract electrons from H(2)O, generating O(2) and a proton gradient subsequently used for ATP formation. It consists of a core antenna complex that captures photons, and an electron transfer chain that converts photonic excitation into a charge separation. This Oltmannsiellopsis viridis (Marine flagellate) protein is Cytochrome b559 subunit beta.